A 240-amino-acid polypeptide reads, in one-letter code: Large ribosomal subunit protein uL2 (240 aa).

A compositionally biased stretch (basic residues) spans 1–12 (MGRRIQGQRRGR). Disordered regions lie at residues 1-21 (MGRRIQGQRRGRGGPTFRAPS) and 198-240 (VDHP…GSNK). The span at 221-231 (PPGRKVGDIAS) shows a compositional bias: basic and acidic residues.

The protein belongs to the universal ribosomal protein uL2 family. Part of the 50S ribosomal subunit. Forms a bridge to the 30S subunit in the 70S ribosome.

One of the primary rRNA binding proteins. Required for association of the 30S and 50S subunits to form the 70S ribosome, for tRNA binding and peptide bond formation. It has been suggested to have peptidyltransferase activity; this is somewhat controversial. Makes several contacts with the 16S rRNA in the 70S ribosome. The polypeptide is Large ribosomal subunit protein uL2 (Halorubrum lacusprofundi (strain ATCC 49239 / DSM 5036 / JCM 8891 / ACAM 34)).